The sequence spans 158 residues: Large ribosomal subunit protein uL16 (158 aa).

Belongs to the universal ribosomal protein uL16 family. In terms of assembly, part of the 50S ribosomal subunit.

Its function is as follows. Binds 23S rRNA and is also seen to make contacts with the A and possibly P site tRNAs. The polypeptide is Large ribosomal subunit protein uL16 (Synechococcus sp. (strain CC9605)).